The following is an 863-amino-acid chain: Glycerol-3-phosphate acyltransferase (863 aa).

The disordered stretch occupies residues M1 to T29. The segment covering E12–T29 has biased composition (polar residues). Positions S343–M348 match the HXXXXD motif motif.

The protein belongs to the GPAT/DAPAT family.

Its subcellular location is the cell inner membrane. The enzyme catalyses sn-glycerol 3-phosphate + an acyl-CoA = a 1-acyl-sn-glycero-3-phosphate + CoA. It functions in the pathway phospholipid metabolism; CDP-diacylglycerol biosynthesis; CDP-diacylglycerol from sn-glycerol 3-phosphate: step 1/3. The protein is Glycerol-3-phosphate acyltransferase of Xylella fastidiosa (strain M23).